Here is a 578-residue protein sequence, read N- to C-terminus: Threonylcarbamoyladenosine tRNA methylthiotransferase (578 aa).

One can recognise an MTTase N-terminal domain in the interval 63 to 171 (QKIWIRTWGC…VVEVVEETIK (109 aa)). 2 residues coordinate [4Fe-4S] cluster: Cys72 and Cys108. Position 121 is a phosphoserine (Ser121). Residues Cys137, Cys213, Cys217, and Cys220 each contribute to the [4Fe-4S] cluster site. One can recognise a Radical SAM core domain in the interval 199-430 (RKNPLIEIIS…RVFHSYNPYD (232 aa)). One can recognise a TRAM domain in the interval 430 to 492 (DHKIGERQQV…KHFLKGQPVS (63 aa)). Thr498 is subject to Phosphothreonine. Residues 553 to 570 (CALKVATGLALLALLLHF) form a helical membrane-spanning segment.

Belongs to the methylthiotransferase family. CDKAL1 subfamily. It depends on [4Fe-4S] cluster as a cofactor. In terms of tissue distribution, expressed in pancreas, liver and skeletal muscle, especially in white muscle fibers.

The protein localises to the endoplasmic reticulum membrane. The enzyme catalyses N(6)-L-threonylcarbamoyladenosine(37) in tRNA + (sulfur carrier)-SH + AH2 + 2 S-adenosyl-L-methionine = 2-methylsulfanyl-N(6)-L-threonylcarbamoyladenosine(37) in tRNA + (sulfur carrier)-H + 5'-deoxyadenosine + L-methionine + A + S-adenosyl-L-homocysteine + 2 H(+). In terms of biological role, catalyzes the methylthiolation of N6-threonylcarbamoyladenosine (t(6)A), leading to the formation of 2-methylthio-N6-threonylcarbamoyladenosine (ms(2)t(6)A) at position 37 in tRNAs that read codons beginning with adenine. The sequence is that of Threonylcarbamoyladenosine tRNA methylthiotransferase (Cdkal1) from Mus musculus (Mouse).